The primary structure comprises 185 residues: Large ribosomal subunit protein bL25 (185 aa).

This sequence belongs to the bacterial ribosomal protein bL25 family. CTC subfamily. In terms of assembly, part of the 50S ribosomal subunit; part of the 5S rRNA/L5/L18/L25 subcomplex. Contacts the 5S rRNA. Binds to the 5S rRNA independently of L5 and L18.

In terms of biological role, this is one of the proteins that binds to the 5S RNA in the ribosome where it forms part of the central protuberance. The polypeptide is Large ribosomal subunit protein bL25 (Chlamydia trachomatis serovar A (strain ATCC VR-571B / DSM 19440 / HAR-13)).